The chain runs to 231 residues: NADH-ubiquinone oxidoreductase chain 4 (231 aa).

The next 6 helical transmembrane spans lie at 1-21, 34-54, 63-85, 89-111, 118-138, and 169-189; these read PIAGSMVLAAILLKLGGYGII, MFLPFLVLALWGAILANLTCL, IAYSSISHMGLVVAAIIIQTPWG, AMALMIAHGFTSSALFCLANTTY, ILILTRGFHNILPMATTWWLL, and TIILLGMSMLITASYSLHMFL.

The protein belongs to the complex I subunit 4 family.

It localises to the mitochondrion membrane. It catalyses the reaction a ubiquinone + NADH + 5 H(+)(in) = a ubiquinol + NAD(+) + 4 H(+)(out). In terms of biological role, core subunit of the mitochondrial membrane respiratory chain NADH dehydrogenase (Complex I) that is believed to belong to the minimal assembly required for catalysis. Complex I functions in the transfer of electrons from NADH to the respiratory chain. The immediate electron acceptor for the enzyme is believed to be ubiquinone. This Trimeresurus cantori (Cantor's pit viper) protein is NADH-ubiquinone oxidoreductase chain 4 (MT-ND4).